The primary structure comprises 356 residues: Probable cytosolic iron-sulfur protein assembly protein 1 (356 aa).

WD repeat units follow at residues 34 to 73 (GHKR…IRAE), 89 to 128 (GHDS…DYEC), 134 to 173 (EHSQ…DWYC), 179 to 218 (AHSS…ECVE), 244 to 291 (HFSG…ATLR), and 319 to 356 (AHGS…RIWT).

Belongs to the WD repeat CIA1 family.

In terms of biological role, essential component of the cytosolic iron-sulfur (Fe/S) protein assembly machinery. Required for the maturation of extramitochondrial Fe/S proteins. The polypeptide is Probable cytosolic iron-sulfur protein assembly protein 1 (Malassezia globosa (strain ATCC MYA-4612 / CBS 7966) (Dandruff-associated fungus)).